Here is a 3960-residue protein sequence, read N- to C-terminus: Replicase polyprotein 1ab (3960 aa).

A C4-type; atypical zinc finger spans residues 8–28; it reads CTCTPNARVFMAEGQVYCTRC. Residues 69–180 enclose the Peptidase C31 domain; it reads ECSPAGACWL…EDFCPFECAM (112 aa). The interval 69-182 is PCP1-alpha; it reads ECSPAGACWL…FCPFECAMAT (114 aa). Catalysis depends on for Nsp1-alpha papain-like cysteine proteinase activity residues Cys76 and His146. The important for host EIF2AK2 inhibition stretch occupies residues 199 to 200; that stretch reads VS. The segment at 263-382 is PCP1-beta; it reads DTVPEGNCWW…IFRFGSHKWY (120 aa). The region spanning 263 to 383 is the Peptidase C32 domain; the sequence is DTVPEGNCWW…FRFGSHKWYG (121 aa). Residues Cys270 and His339 each act as for Nsp1-beta papain-like cysteine proteinase activity in the active site. Residues 426–513 form an OTU-like region; sequence LKHYSPPAEG…GEHWTVTVTP (88 aa). Residues 428–535 enclose the Peptidase C33 domain; it reads HYSPPAEGNC…QGCCGHKGGL (108 aa). Catalysis depends on for Nsp2 cysteine proteinase activity residues Cys437 and His506. Disordered regions lie at residues 809-882, 899-979, and 1156-1213; these read RWTP…ATPS, TPLS…GVLG, and PLAF…GGGP. The span at 810-819 shows a compositional bias: pro residues; sequence WTPPPPPPKV. 8 helical membrane passes run 1266–1286, 1296–1316, 1345–1365, 1368–1388, 1583–1603, 1650–1670, 1685–1705, and 1719–1739; these read LCLFLCYSYPAFGIAPLLGVF, GVFGCWLAFAVGLFKPVSDPV, SLVVGPVGLGLAILGRLLGGA, IWHFLLRLGIVADCILAGAYV, LMAALHVACSMALHMLAGIYV, ALVAGFGIQEIALVVLIFVSI, CVLLAIASYVWVPLTWLLCVF, and ILWLVFFLISVNMPSGILAMV. Positions 1266 to 1388 are HD1; the sequence is LCLFLCYSYP…ADCILAGAYV (123 aa). The segment at 1583 to 1745 is HD2; the sequence is LMAALHVACS…LAMVLLVSLW (163 aa). Positions 1810–2013 constitute a Peptidase S32 domain; sequence GAFRTRKPSL…ALLAAKPELE (204 aa). Catalysis depends on charge relay system; for 3C-like serine proteinase activity residues His1848, Asp1873, and Ser1927. 5 helical membrane-spanning segments follow: residues 2012 to 2032, 2060 to 2080, 2092 to 2112, 2137 to 2157, and 2164 to 2184; these read LEGGLSTVQLLCVFFLLWRMM, FSFGMFVLSWLTPWSAQVLMI, WSLAFFSLGAVTGFVADLAAT, SPVPVITCGVVHLLAIILYLF, and HILVGDGVFSAAFFLRYFAEG. Positions 2036 to 2157 are HD3; the sequence is WTPLVAVSFF…HLLAIILYLF (122 aa). Residues 2329-2358 are disordered; the sequence is PTPTPPPAPVPIPLPPKVLENGPNAWGDED. Residues 2330 to 2344 show a composition bias toward pro residues; sequence TPTPPPAPVPIPLPP. Positions 2488-2650 constitute a NiRAN domain; sequence IIDKLQGLTK…LPYKLYPVRG (163 aa). One can recognise a RdRp catalytic domain in the interval 2889-3023; it reads GRCLEADLAS…YAESPTMPNY (135 aa). One can recognise an AV ZBD domain in the interval 3144-3207; sequence GKKSRVCGYC…SPVGKGTSPL (64 aa). The Zn(2+) site is built by Cys3150, Cys3153, Cys3163, Cys3168, His3171, His3173, His3175, His3177, Cys3184, His3186, Cys3193, and Cys3196. The 153-residue stretch at 3264 to 3416 folds into the (+)RNA virus helicase ATP-binding domain; it reads ASTALLPTCK…VFDIMPQTQL (153 aa). Position 3292-3299 (3292-3299) interacts with ATP; sequence GPPGAGKT. Residues 3417–3545 enclose the (+)RNA virus helicase C-terminal domain; the sequence is KTIWRFGQNI…AVHCDGQLIV (129 aa). Positions 3584–3680 constitute an AV-Nsp11N/CoV-Nsp15M domain; it reads EGSSSPLPKV…LTKFVKGGAQ (97 aa). Residues 3682–3804 enclose the NendoU domain; it reads LPETVFSTGR…MVWKDKTAYF (123 aa). Catalysis depends on residues His3713, His3728, and Lys3757.

This sequence belongs to the arteriviridae polyprotein family. In terms of assembly, nsp1-alpha papain-like: Interacts with host RNF31. Interacts with host EIF2AK2; this interaction occurs in host stress granules and leads to EIF2AK2 inhibition. Interacts with host G3BP1; this interaction probably plays a role in Nsp1-beta-mediated inhibition of host EIF2AK2. As to quaternary structure, interacts with host DDX18; this interaction redistributes host DDX18 to the cytoplasm. In terms of assembly, interacts with host IFITM1. Interacts with host DDX5. As to quaternary structure, interacts with host OTULIN. In terms of assembly, interacts with host LGALS3. Post-translationally, specific enzymatic cleavages in vivo by its own proteases yield mature proteins. Nsp1 is autocleaved into two subunits, Nsp1-alpha and Nsp1-beta. There are two alternative pathways for processing. Either nsp4-5 is cleaved, which represents the major pathway or the nsp5-6 and nsp6-7 are processed, which represents the minor pathway. The major pathway occurs when nsp2 acts as a cofactor for nsp4.

It is found in the host nucleus. The protein resides in the host cytoplasm. It localises to the host membrane. The protein localises to the host endoplasmic reticulum. Its subcellular location is the host perinuclear region. It catalyses the reaction RNA(n) + a ribonucleoside 5'-triphosphate = RNA(n+1) + diphosphate. The enzyme catalyses ATP + H2O = ADP + phosphate + H(+). The catalysed reaction is Thiol-dependent hydrolysis of ester, thioester, amide, peptide and isopeptide bonds formed by the C-terminal Gly of ubiquitin (a 76-residue protein attached to proteins as an intracellular targeting signal).. It carries out the reaction uridylyl-uridylyl-ribonucleotide-RNA = a 3'-end uridylyl-2',3'-cyclophospho-uridine-RNA + a 5'-end dephospho-ribonucleoside-RNA. Functionally, contains the activities necessary for the transcription of negative stranded RNA, leader RNA, subgenomic mRNAs and progeny virion RNA as well as proteinases responsible for the cleavage of the polyprotein into functional products. In terms of biological role, inhibits host IFN-beta production. Plays a role in the degradation of the host transcriptional activator CREBBP protein. The degradation of host CREBBP which is a key component of the IFN enhanceosome is likely responsible for the inhibition of interferon mediated by Nsp1-alpha. Also participates in the inhibition of host NF-kappa-B activation by counteracting LUBAC-dependent induction of NF-kappa-B. Reduces host NEMO ubiquitination by blocking the interaction between the two LUBAC complex components RNF31 and SHARPIN. Its function is as follows. Plays a role in blocking host mRNA nuclear export to the cytoplasm and subversion of host protein synthesis. Additionally, inhibits the interferon-activated JAK/STAT signal transduction by mediating the ubiquitination and subsequent proteasomal degradation of host KPNA1. Repurposes the host antiviral stress granules into a proviral platform to counteract the EIF2AK2/PKR restriction, thereby regulating the host inflammatory response. Multifunctional protein that acts as a viral protease and as a viral antagonist of host immune response. Cleaves the nsp2/nsp3 site in the viral polyprotein. Displays deubiquitinating activity that cleaves both ubiquitinated and ISGylated products and therefore inhibits ubiquitin and ISG15-dependent host innate immunity. Also deubiquinates host NFKBIA, thereby interfering with NFKBIA degradation and impairing subsequent NF-kappa-B activation. Functionally, plays a role in the inhibition of the immune response by interacting with host IFITM1. This interaction leads to the proteasomal degradation of the IFN-induced antiviral protein IFITM1. In terms of biological role, cleaves the majority of cleavage sites present in the C-terminus of the polyprotein. Triggers host apoptosis through caspase-3, -8, and -9 activations. Subverts host innate immune responses through its protease activity. Targets the NF-kappa-B essential modulator NEMO and mediates its cleavage. Blocks host interferon beta induction and downstream signaling by cleaving mitochondrial MAVS, dislodging it from the mitochondria. Impairs host defense by cleaving host mRNA-decapping enzyme DCP1A to attenuate its antiviral activity. Its function is as follows. Plays a role in the initial induction of autophagosomes from host endoplasmic reticulum. Plays a role in the inhibition of host STAT3 signaling pathway by inducing the degradation of STAT3. Functionally, responsible for replication and transcription of the viral RNA genome. In terms of biological role, displays RNA and DNA duplex-unwinding activities with 5' to 3' polarity. Its function is as follows. Plays a role in viral transcription/replication and prevents the simultaneous activation of host cell dsRNA sensors, such as MDA5/IFIH1, OAS, PKR and NLRP3 inflammasome. Acts by degrading the 5'-polyuridines generated during replication of the poly(A) region of viral genomic and subgenomic RNAs. Catalyzes a two-step reaction in which a 2'3'-cyclic phosphate (2'3'-cP) is first generated by 2'-O transesterification, which is then hydrolyzed to a 3'-phosphate (3'-P). If not degraded, poly(U) RNA would hybridize with poly(A) RNA tails and activate host dsRNA sensors. Also plays a role in the inhibition of host type I interferon production by recruiting host OTULIN to promote removal of linear ubiquitination targeting host NEMO. This is Replicase polyprotein 1ab (rep) from Porcine reproductive and respiratory syndrome virus (strain VR-2332) (PRRSV).